Consider the following 236-residue polypeptide: Translocon-associated protein subunit alpha (236 aa).

The N-terminal stretch at 1 to 20 is a signal peptide; sequence MNKLITLLLAVLMIISCVYS. The Lumenal portion of the chain corresponds to 21–163; that stretch reads DDVEITDDEV…TEKETSFDMD (143 aa). N-linked (GlcNAc...) asparagine glycosylation is found at Asn-74, Asn-94, Asn-141, Asn-148, and Asn-152. A helical transmembrane segment spans residues 164–184; the sequence is SFFLILLGLGFVGGIGYIVYG. Residues 185 to 236 are Cytoplasmic-facing; sequence KMPKQKKVRTVSKVNKNAVRVETEDETAEWLSGTSAASSKVKSVQKVVKKNK.

Belongs to the TRAP-alpha family. As to quaternary structure, heterotrimer of TRAP-alpha, TRAP-beta and TRAP-gamma. Phosphorylated in its cytoplasmic tail.

Its subcellular location is the endoplasmic reticulum membrane. In terms of biological role, TRAP proteins are part of a complex whose function is to bind calcium to the ER membrane and thereby regulate the retention of ER resident proteins. This Dictyostelium discoideum (Social amoeba) protein is Translocon-associated protein subunit alpha (ssr1).